Consider the following 342-residue polypeptide: uncharacterized protein (342 aa).

The next 10 helical transmembrane spans lie at 8–28 (FESSWFAAVMGTGVLAVTSLF), 39–59 (ISFLLFYFNILLFFVFLMLWI), 79–99 (SSFSPTVAVAMLVLGIDFILI), 108–128 (IFWVFGAIGMFLFSLIVPFYM), 142–162 (GWYIPPVGLIVIPIAGSLIMP), 175–195 (INYFGWGAGFFLYLALLAVVI), 207–227 (AMAPTVWINLGPIGAGIVALI), 242–262 (FYIFSFIFWGFGLWWSLMAII), 276–296 (AMSWWAFIFPLGVYIASTHLV), and 304–324 (IVDYIGFGLYWLLFFFWIVTL).

Belongs to the tellurite-resistance/dicarboxylate transporter (TDT) family.

Its subcellular location is the cell membrane. This is an uncharacterized protein from Methanocaldococcus jannaschii (strain ATCC 43067 / DSM 2661 / JAL-1 / JCM 10045 / NBRC 100440) (Methanococcus jannaschii).